The chain runs to 133 residues: Ribosome-binding factor A (133 aa).

It belongs to the RbfA family. Monomer. Binds 30S ribosomal subunits, but not 50S ribosomal subunits or 70S ribosomes.

Its subcellular location is the cytoplasm. In terms of biological role, one of several proteins that assist in the late maturation steps of the functional core of the 30S ribosomal subunit. Associates with free 30S ribosomal subunits (but not with 30S subunits that are part of 70S ribosomes or polysomes). Required for efficient processing of 16S rRNA. May interact with the 5'-terminal helix region of 16S rRNA. This chain is Ribosome-binding factor A, found in Enterobacter sp. (strain 638).